A 158-amino-acid chain; its full sequence is NAD(P)H-quinone oxidoreductase subunit J, chloroplastic (158 aa).

Belongs to the complex I 30 kDa subunit family. In terms of assembly, NDH is composed of at least 16 different subunits, 5 of which are encoded in the nucleus.

The protein resides in the plastid. It localises to the chloroplast thylakoid membrane. It carries out the reaction a plastoquinone + NADH + (n+1) H(+)(in) = a plastoquinol + NAD(+) + n H(+)(out). It catalyses the reaction a plastoquinone + NADPH + (n+1) H(+)(in) = a plastoquinol + NADP(+) + n H(+)(out). Its function is as follows. NDH shuttles electrons from NAD(P)H:plastoquinone, via FMN and iron-sulfur (Fe-S) centers, to quinones in the photosynthetic chain and possibly in a chloroplast respiratory chain. The immediate electron acceptor for the enzyme in this species is believed to be plastoquinone. Couples the redox reaction to proton translocation, and thus conserves the redox energy in a proton gradient. This Amborella trichopoda protein is NAD(P)H-quinone oxidoreductase subunit J, chloroplastic.